A 236-amino-acid polypeptide reads, in one-letter code: Sugar fermentation stimulation protein homolog (236 aa).

The protein belongs to the SfsA family.

The sequence is that of Sugar fermentation stimulation protein homolog from Methylobacterium nodulans (strain LMG 21967 / CNCM I-2342 / ORS 2060).